Here is a 99-residue protein sequence, read N- to C-terminus: Nucleoid-associated protein SpyM3_1606 (99 aa).

Belongs to the YbaB/EbfC family. Homodimer.

It localises to the cytoplasm. The protein resides in the nucleoid. In terms of biological role, binds to DNA and alters its conformation. May be involved in regulation of gene expression, nucleoid organization and DNA protection. The polypeptide is Nucleoid-associated protein SpyM3_1606 (Streptococcus pyogenes serotype M3 (strain ATCC BAA-595 / MGAS315)).